Consider the following 250-residue polypeptide: DNA repair protein RecO (250 aa).

Belongs to the RecO family.

Involved in DNA repair and RecF pathway recombination. The sequence is that of DNA repair protein RecO from Staphylococcus aureus (strain Mu3 / ATCC 700698).